Consider the following 511-residue polypeptide: MAAAEAVHHIHLQNFSRSLLETLNGQRLGGHFCDVTVRIREASLRAHRCVLAAGSPFFQDKLLLGHSEIRVPPVVPAQTVRQLVEFLYSGSLVVAQGEALQVLTAASVLRIQTVIDECTQIIARARAPGTSAPTPLPTPVPPPLAPAQLRHRLRHLLAARPPGHPGAAHSRKQRQPARLQLPAPPTPAKAEGPDADPSLSAAPDDRGDEDDEESDDETDGEDGEGGGPGEGQAPPSFPDCAAGFLTAAADSACEEPPAPTGLADYSGAGRDFLRGAGSAEDVFPDSYVSTWHDEDGAVPEGCPTETPVQPDCILSGSRPPGVKTPGPPVALFPFHLGAPGPPAPPPSAPSGPAPAPPPAFYPTLQPEAAPSTQLGEVPAPSAAPTTAPSGTPARTPGAEPPTYECSHCRKTFSSRKNYTKHMFIHSGEKPHQCAVCWRSFSLRDYLLKHMVTHTGVRAFQCAVCAKRFTQKSSLNVHMRTHRPERAPCPACGKVFSHRALLERHLAAHPAP.

The 64-residue stretch at 33-96 (CDVTVRIREA…LYSGSLVVAQ (64 aa)) folds into the BTB domain. The span at 159–168 (ARPPGHPGAA) shows a compositional bias: low complexity. Disordered stretches follow at residues 159–241 (ARPP…PDCA) and 294–403 (EDGA…PPTY). A compositionally biased stretch (acidic residues) spans 206–224 (RGDEDDEESDDETDGEDGE). A compositionally biased stretch (pro residues) spans 339-360 (PGPPAPPPSAPSGPAPAPPPAF). Positions 378-397 (PAPSAAPTTAPSGTPARTPG) are enriched in low complexity. 4 C2H2-type zinc fingers span residues 403 to 425 (YECS…MFIH), 431 to 453 (HQCA…MVTH), 459 to 481 (FQCA…MRTH), and 486 to 508 (APCP…LAAH).

Belongs to the krueppel C2H2-type zinc-finger protein family.

It localises to the nucleus. Functionally, may be involved in transcriptional regulation. In the central nervous system, may play a role in glial cell differentiation. The polypeptide is Zinc finger and BTB domain-containing protein 45 (ZBTB45) (Homo sapiens (Human)).